We begin with the raw amino-acid sequence, 305 residues long: Short-chain dehydrogenase/reductase VdtF (305 aa).

NADP(+) is bound by residues Leu28 and Asn98. Ser192 acts as the Proton donor in catalysis. Residues Tyr206, Lys210, and Thr241 each coordinate NADP(+). Tyr206 serves as the catalytic Proton acceptor. Lys210 (lowers pKa of active site Tyr) is an active-site residue.

It belongs to the short-chain dehydrogenases/reductases (SDR) family.

It carries out the reaction methyl 2-[(3S)-9,10-dihydroxy-7-methoxy-1-oxo-1H,3H,4H-naphtho[2,3-c]pyran-3-yl]acetate + AH2 = semiviriditoxin + A. The catalysed reaction is 9,10-dihydroxy-7-methoxy-3-(2-oxopropyl)-1H-benzo[g]isochromen-1-one + AH2 = (3S)-9,10-dihydroxy-7-methoxy-3-(2-oxopropyl)-1H,3H,4H-naphtho[2,3-c]pyran-1-one + A. Its pathway is secondary metabolite biosynthesis. In terms of biological role, short-chain dehydrogenase/reductase; part of the gene cluster that mediates the biosynthesis of viriditoxin, one of the 'classical' secondary metabolites produced by fungi and that has antibacterial activity. The first step is performed by the polyketide synthase VdtA which condenses one acetyl-CoA and 6 malonyl-CoA units to form the heptaketide monomer backbone of viriditoxin. The product of VdtA is then O-methylated on C7 by the O-methyltransferase VdtC. The O-methyl group is important for the stereoselective coupling of the monomers at the final step of viriditoxin biosynthesis. The short-chain dehydrogenase/reductase VdtF then acts as a stereospecific reductase converting the pyrone to dihydropyrone via the reduction of the C3-C4 double bond. The FAD-binding monooxygenase VdtE then converts the ketone group into a methyl-ester group to yield semi-viriditoxin. Finally, the laccase VdtB is involved in dimerization of 2 semi-viriditoxin molecules to yield the final viriditoxin. VdtB is responsible for the regioselective 6,6'-coupling of semi-viriditoxin, which yields (M)-viriditoxin and (P)-viriditoxin at a ratio of 1:2. The non-catalytic carboxylesterase-like protein VdtD affects the stereochemistical outcome of the coupling. The highly reducing polyketide synthase VdtX is not involved in viriditoxin synthesis, but might possibly play a role in the production of additional metabolites not identified yet. In Byssochlamys spectabilis (Paecilomyces variotii), this protein is Short-chain dehydrogenase/reductase VdtF.